The chain runs to 464 residues: MSLQLLRNTRIFVSTVKTGHNKTNTQEILVQDDISWGQDSNSTDITVNEAGPRPTRGSKRFNDSLNAAEWSFSTYILPYKDKNTSKQIVPDYMLWHALSSGRAINLEGTTGAHNNATNFMVNFKDNSYHELAMLHIYILTDKTWSYIDSCQINQAEVNVDIEDIGRVTWSGNGNQLIPLDEQPFDPDQIGIDDETYMTIQGSYIKNKLTILKIKDMDTNKSYDIPITGGTFTINNNITYLTPNVMSRVTIPIGSFTGAFELTGSLTAYLNDKSLGSMELYKDLIKTLKVVNRFEIALVLGGEYDDERPAAILVAKQAHVNIPTIETDDVLGTSVEFKAIPSDLDAGDEGYLGFSSKYTRTTINNLIVNGDGATDAVTAITVKSAGNVTTLNRSATLQMSVEVTPSSARNKEVTWAITAGDAATINATGLLRADASKTGAVTVEATAKDGSGVKGTKVITVTAGG.

The tract at residues 40–59 (SNSTDITVNEAGPRPTRGSK) is disordered. Residues 375 to 453 (AVTAITVKSA…ATAKDGSGVK (79 aa)) enclose the BIG2 domain.

Homotrimer. The tail tube is made of 40 stacked trimeric rings. Interacts with baseplate tube protein p140.

The protein resides in the virion. Its function is as follows. Polymerizes to form the tail tube of the phage. Tail tube protein polymerization takes place around the tape measure protein (TMP-pb2) and is probably directed by chaperone proteins. The tail tube is involved in viral genome delivery during ejection. The protein is Tail tube protein pb6 of Escherichia coli (Enterobacteria phage T5).